Reading from the N-terminus, the 525-residue chain is WD repeat-containing protein JIP5 (525 aa).

5 WD repeats span residues Val-28 to Asn-69, Arg-121 to Lys-160, His-211 to Ala-251, Gln-270 to Gln-310, and Arg-358 to Glu-398. Residues Asp-396 to Leu-525 are disordered. Positions Ser-410–Ser-424 are enriched in acidic residues. Residues Asp-425 to Asp-435 are compositionally biased toward low complexity. The span at Ser-463–His-484 shows a compositional bias: basic and acidic residues. Over residues Tyr-485–Lys-501 the composition is skewed to basic residues. Positions Gln-513–Leu-525 are enriched in basic and acidic residues.

Belongs to the WD repeat WDR55 family.

The protein resides in the nucleus. It is found in the nucleolus. The sequence is that of WD repeat-containing protein JIP5 (JIP5) from Kluyveromyces lactis (strain ATCC 8585 / CBS 2359 / DSM 70799 / NBRC 1267 / NRRL Y-1140 / WM37) (Yeast).